A 330-amino-acid chain; its full sequence is Daunorubicin/doxorubicin resistance ATP-binding protein DrrA (330 aa).

The region spanning 9 to 239 is the ABC transporter domain; sequence IETSGLVKVY…LGSNVLRLRL (231 aa). 41-48 lines the ATP pocket; sequence GPNGAGKS.

Belongs to the ABC transporter superfamily. Drug exporter-1 (DrugE1) (TC 3.A.1.105) family. As to quaternary structure, the complex is composed of two ATP-binding proteins (DrrA) and two transmembrane proteins (DrrB).

Its subcellular location is the cell membrane. The catalysed reaction is daunorubicin(in) + ATP + H2O = daunorubicin(out) + ADP + phosphate + H(+). Functionally, part of the ABC transporter complex DrrAB involved in daunorubicin and doxorubicin resistance. Responsible for energy coupling to the transport system. Binds ATP or GTP. The chain is Daunorubicin/doxorubicin resistance ATP-binding protein DrrA (drrA) from Streptomyces peucetius.